We begin with the raw amino-acid sequence, 158 residues long: 6,7-dimethyl-8-ribityllumazine synthase (158 aa).

5-amino-6-(D-ribitylamino)uracil-binding positions include Phe-24, 62 to 64 (CFE), and 86 to 88 (AVI). A (2S)-2-hydroxy-3-oxobutyl phosphate-binding site is contributed by 91-92 (DT). His-94 serves as the catalytic Proton donor. A 5-amino-6-(D-ribitylamino)uracil-binding site is contributed by Phe-119. Position 133 (Arg-133) interacts with (2S)-2-hydroxy-3-oxobutyl phosphate.

Belongs to the DMRL synthase family.

The enzyme catalyses (2S)-2-hydroxy-3-oxobutyl phosphate + 5-amino-6-(D-ribitylamino)uracil = 6,7-dimethyl-8-(1-D-ribityl)lumazine + phosphate + 2 H2O + H(+). It participates in cofactor biosynthesis; riboflavin biosynthesis; riboflavin from 2-hydroxy-3-oxobutyl phosphate and 5-amino-6-(D-ribitylamino)uracil: step 1/2. Its function is as follows. Catalyzes the formation of 6,7-dimethyl-8-ribityllumazine by condensation of 5-amino-6-(D-ribitylamino)uracil with 3,4-dihydroxy-2-butanone 4-phosphate. This is the penultimate step in the biosynthesis of riboflavin. This chain is 6,7-dimethyl-8-ribityllumazine synthase, found in Picosynechococcus sp. (strain ATCC 27264 / PCC 7002 / PR-6) (Agmenellum quadruplicatum).